Here is a 114-residue protein sequence, read N- to C-terminus: Putative toxin HigB3 (114 aa).

The protein belongs to the mycobacterial HigB family.

Putative toxic component of a type II toxin-antitoxin (TA) system. Its cognate antitoxin would be HigA3. Not toxic upon expression in M.smegmatis. This is Putative toxin HigB3 from Mycobacterium tuberculosis (strain ATCC 25618 / H37Rv).